We begin with the raw amino-acid sequence, 325 residues long: Hexaprenyl-diphosphate synthase large subunit ((2E,6E)-farnesyl-diphosphate specific) (325 aa).

Isopentenyl diphosphate contacts are provided by K45, R48, and H77. All-trans-hexaprenyl diphosphate contacts are provided by D84, D88, and R93. D84 and D88 together coordinate Mg(2+). R94 contacts isopentenyl diphosphate. All-trans-hexaprenyl diphosphate is bound by residues K170, T171, and Q208.

It belongs to the FPP/GGPP synthase family. Dimer of heterodimer or heterotetramer composed of a small (Hexs-a) and large (Hexs-B) subunit. The cofactor is Mg(2+).

It catalyses the reaction 3 isopentenyl diphosphate + (2E,6E)-farnesyl diphosphate = all-trans-hexaprenyl diphosphate + 3 diphosphate. Catalyzes the condensation of three molecules of isopentenyl diphosphate with farnesyl diphosphate (FPP) to yield (all-E)-hexaprenyl diphosphate (HexPP; C30), the precursor of the prenyl side chain of menaquinone-6. Large subunit Hexs-B catalyzes the condensation reaction and the final product chain length is cooperatively regulated by both the Hexs-A and Hexs-B subunits using the whole size of the hydrophobic cleft as a ruler. The chain is Hexaprenyl-diphosphate synthase large subunit ((2E,6E)-farnesyl-diphosphate specific) (hexs-b) from Micrococcus luteus (Micrococcus lysodeikticus).